A 787-amino-acid polypeptide reads, in one-letter code: Endonuclease MutS2 (787 aa).

331–338 (GPNTGGKT) contributes to the ATP binding site. The Smr domain maps to 711-786 (IDVRGKTSDD…EQGVTVVELK (76 aa)).

The protein belongs to the DNA mismatch repair MutS family. MutS2 subfamily. As to quaternary structure, homodimer. Binds to stalled ribosomes, contacting rRNA.

Functionally, endonuclease that is involved in the suppression of homologous recombination and thus may have a key role in the control of bacterial genetic diversity. Its function is as follows. Acts as a ribosome collision sensor, splitting the ribosome into its 2 subunits. Detects stalled/collided 70S ribosomes which it binds and splits by an ATP-hydrolysis driven conformational change. Acts upstream of the ribosome quality control system (RQC), a ribosome-associated complex that mediates the extraction of incompletely synthesized nascent chains from stalled ribosomes and their subsequent degradation. Probably generates substrates for RQC. The chain is Endonuclease MutS2 from Caldicellulosiruptor bescii (strain ATCC BAA-1888 / DSM 6725 / KCTC 15123 / Z-1320) (Anaerocellum thermophilum).